A 244-amino-acid chain; its full sequence is 7-cyano-7-deazaguanine synthase (244 aa).

14-24 is an ATP binding site; it reads FSGGQDSATCV. Cysteine 202, cysteine 217, cysteine 220, and cysteine 223 together coordinate Zn(2+).

It belongs to the QueC family. Zn(2+) serves as cofactor.

The catalysed reaction is 7-carboxy-7-deazaguanine + NH4(+) + ATP = 7-cyano-7-deazaguanine + ADP + phosphate + H2O + H(+). It participates in purine metabolism; 7-cyano-7-deazaguanine biosynthesis. Functionally, catalyzes the ATP-dependent conversion of 7-carboxy-7-deazaguanine (CDG) to 7-cyano-7-deazaguanine (preQ(0)). This is 7-cyano-7-deazaguanine synthase from Burkholderia mallei (strain NCTC 10229).